Here is a 141-residue protein sequence, read N- to C-terminus: Lutropin subunit beta (141 aa).

The first 20 residues, 1–20 (MERLQGLLLWLLLSPSVVWA), serve as a signal peptide directing secretion. 5 cysteine pairs are disulfide-bonded: Cys29-Cys77, Cys43-Cys92, Cys54-Cys108, Cys58-Cys110, and Cys113-Cys120. N-linked (GlcNAc...) asparagine glycosylation is present at Asn33.

Belongs to the glycoprotein hormones subunit beta family. In terms of assembly, heterodimer of a common alpha chain and a unique beta chain which confers biological specificity to thyrotropin, lutropin, follitropin and gonadotropin.

It localises to the secreted. In terms of biological role, promotes spermatogenesis and ovulation by stimulating the testes and ovaries to synthesize steroids. This Mus musculus (Mouse) protein is Lutropin subunit beta (Lhb).